The sequence spans 88 residues: Small ribosomal subunit protein uS15c (88 aa).

Belongs to the universal ribosomal protein uS15 family. In terms of assembly, part of the 30S ribosomal subunit.

It localises to the plastid. The protein localises to the chloroplast. This is Small ribosomal subunit protein uS15c (rps15) from Arabis hirsuta (Hairy rock-cress).